The following is a 343-amino-acid chain: Heat-inducible transcription repressor HrcA (343 aa).

This sequence belongs to the HrcA family.

Negative regulator of class I heat shock genes (grpE-dnaK-dnaJ and groELS operons). Prevents heat-shock induction of these operons. The protein is Heat-inducible transcription repressor HrcA of Clostridium botulinum (strain Alaska E43 / Type E3).